The chain runs to 433 residues: MTDISPREIVSELDRFIVGQADAKRAVSIALRNRWRRQQLTGPLREEVLPKNILMIGPTGVGKTEIARRLAKLANAPFLKIEATKFTEVGYVGRDVEQIVRDIVEVAINQTRERKRKDVQARAQLAAEERVLDALVGANASAATRDSFRKRLRSGELNDKEIEIETQTSGGGPMFEIPGMPGAQVGAISIGDIFGKMGGRTKTRRLTVSDSYEILINEESDKLLDSDQLTQEAIAAVENNGIVFLDEIDKICVRDGRSGGDVSREGVQRDLLPLIEGTTVSTKHGAVKTDHILFIASGAFHIAKPSDLLPELQGRLPIRVELDALTRDDLRRILTEPEASLIKQYVALMDTEGVVLDFTDDAVDALADIAVAVNSTVENIGARRLQTVMERVLDDISFTAPDRNGETVRIDAGYVQKNIGDLAKNADLSRFIL.

ATP-binding positions include V18, 60–65 (GVGKTE), D246, E311, and R383.

Belongs to the ClpX chaperone family. HslU subfamily. In terms of assembly, a double ring-shaped homohexamer of HslV is capped on each side by a ring-shaped HslU homohexamer. The assembly of the HslU/HslV complex is dependent on binding of ATP.

The protein localises to the cytoplasm. Its function is as follows. ATPase subunit of a proteasome-like degradation complex; this subunit has chaperone activity. The binding of ATP and its subsequent hydrolysis by HslU are essential for unfolding of protein substrates subsequently hydrolyzed by HslV. HslU recognizes the N-terminal part of its protein substrates and unfolds these before they are guided to HslV for hydrolysis. The sequence is that of ATP-dependent protease ATPase subunit HslU from Nitrobacter winogradskyi (strain ATCC 25391 / DSM 10237 / CIP 104748 / NCIMB 11846 / Nb-255).